The primary structure comprises 172 residues: Peptide deformylase (172 aa).

Fe cation-binding residues include Cys94 and His136. The active site involves Glu137. His140 serves as a coordination point for Fe cation.

The protein belongs to the polypeptide deformylase family. The cofactor is Fe(2+).

It carries out the reaction N-terminal N-formyl-L-methionyl-[peptide] + H2O = N-terminal L-methionyl-[peptide] + formate. Functionally, removes the formyl group from the N-terminal Met of newly synthesized proteins. Requires at least a dipeptide for an efficient rate of reaction. N-terminal L-methionine is a prerequisite for activity but the enzyme has broad specificity at other positions. This chain is Peptide deformylase, found in Pelagibacter ubique (strain HTCC1062).